The primary structure comprises 337 residues: HTH-type transcriptional repressor PurR (337 aa).

The 55-residue stretch at 2 to 56 (ATIKDVAKLAAVSTTTVSHVINKTRFVAEATQKRVWEAVEELNYAPSAVARSLKC) folds into the HTH lacI-type domain. A DNA-binding region (H-T-H motif) is located at residues 4–23 (IKDVAKLAAVSTTTVSHVIN). Residues 48–56 (SAVARSLKC) mediate DNA binding. Hypoxanthine-binding residues include phenylalanine 73, lysine 189, threonine 191, phenylalanine 220, and aspartate 276.

As to quaternary structure, homodimer.

The protein operates within purine metabolism; purine nucleotide biosynthesis [regulation]. In terms of biological role, is the main repressor of the genes involved in the de novo synthesis of purine nucleotides, regulating purB, purC, purEK, purF, purHD, purL, purMN and guaBA expression. PurR is allosterically activated to bind its cognate DNA by binding the purine corepressors, hypoxanthine or guanine, thereby effecting transcription repression. The protein is HTH-type transcriptional repressor PurR of Aliivibrio fischeri (strain MJ11) (Vibrio fischeri).